Here is a 304-residue protein sequence, read N- to C-terminus: tRNA pseudouridine synthase A (304 aa).

D65 serves as the catalytic Nucleophile. Y123 contacts substrate. The tract at residues 274-304 (HTGQEKPEARLGNGDLESREERPPHEMSPLH) is disordered. The span at 289–298 (LESREERPPH) shows a compositional bias: basic and acidic residues.

This sequence belongs to the tRNA pseudouridine synthase TruA family. Homodimer.

It carries out the reaction uridine(38/39/40) in tRNA = pseudouridine(38/39/40) in tRNA. Its function is as follows. Formation of pseudouridine at positions 38, 39 and 40 in the anticodon stem and loop of transfer RNAs. The polypeptide is tRNA pseudouridine synthase A (Gloeobacter violaceus (strain ATCC 29082 / PCC 7421)).